Consider the following 114-residue polypeptide: Large ribosomal subunit protein uL18 (114 aa).

The protein belongs to the universal ribosomal protein uL18 family. Part of the 50S ribosomal subunit; part of the 5S rRNA/L5/L18/L25 subcomplex. Contacts the 5S and 23S rRNAs.

Its function is as follows. This is one of the proteins that bind and probably mediate the attachment of the 5S RNA into the large ribosomal subunit, where it forms part of the central protuberance. The protein is Large ribosomal subunit protein uL18 of Parabacteroides distasonis (strain ATCC 8503 / DSM 20701 / CIP 104284 / JCM 5825 / NCTC 11152).